A 479-amino-acid polypeptide reads, in one-letter code: Muscarinic acetylcholine receptor M4 (479 aa).

The Extracellular segment spans residues methionine 1 to glutamate 30. Residues asparagine 8 and asparagine 13 are each glycosylated (N-linked (GlcNAc...) asparagine). A helical transmembrane segment spans residues methionine 31 to methionine 53. The Cytoplasmic segment spans residues leucine 54–asparagine 67. The helical transmembrane segment at tyrosine 68–tyrosine 88 threads the bilayer. At threonine 89–aspartate 105 the chain is on the extracellular side. Cysteines 104 and 184 form a disulfide. The chain crosses the membrane as a helical span at residues leucine 106–phenylalanine 127. At aspartate 128 to methionine 147 the chain is on the cytoplasmic side. Residues alanine 148–tryptophan 170 traverse the membrane as a helical segment. Residues glutamine 171 to proline 192 are Extracellular-facing. Residues alanine 193–isoleucine 215 form a helical membrane-spanning segment. Over histidine 216–threonine 401 the chain is Cytoplasmic. Residues leucine 271–asparagine 334 form a disordered region. Over residues alanine 274–proline 285 the composition is skewed to pro residues. Residues asparagine 293–asparagine 303 are compositionally biased toward polar residues. The segment covering threonine 310–leucine 333 has biased composition (low complexity). A helical transmembrane segment spans residues isoleucine 402–valine 422. Residues asparagine 423–serine 436 are Extracellular-facing. Residues isoleucine 437–cysteine 456 traverse the membrane as a helical segment. Residues asparagine 457–arginine 479 are Cytoplasmic-facing. A phosphothreonine mark is found at threonine 459, threonine 463, and threonine 477.

This sequence belongs to the G-protein coupled receptor 1 family. Muscarinic acetylcholine receptor subfamily. CHRM4 sub-subfamily.

The protein resides in the cell membrane. The protein localises to the postsynaptic cell membrane. The muscarinic acetylcholine receptor mediates various cellular responses, including inhibition of adenylate cyclase, breakdown of phosphoinositides and modulation of potassium channels through the action of G proteins. Primary transducing effect is inhibition of adenylate cyclase. The sequence is that of Muscarinic acetylcholine receptor M4 (Chrm4) from Mus musculus (Mouse).